The primary structure comprises 298 residues: ATP phosphoribosyltransferase (298 aa).

It belongs to the ATP phosphoribosyltransferase family. Long subfamily. Mg(2+) serves as cofactor.

It localises to the cytoplasm. It catalyses the reaction 1-(5-phospho-beta-D-ribosyl)-ATP + diphosphate = 5-phospho-alpha-D-ribose 1-diphosphate + ATP. The protein operates within amino-acid biosynthesis; L-histidine biosynthesis; L-histidine from 5-phospho-alpha-D-ribose 1-diphosphate: step 1/9. With respect to regulation, feedback inhibited by histidine. Catalyzes the condensation of ATP and 5-phosphoribose 1-diphosphate to form N'-(5'-phosphoribosyl)-ATP (PR-ATP). Has a crucial role in the pathway because the rate of histidine biosynthesis seems to be controlled primarily by regulation of HisG enzymatic activity. This is ATP phosphoribosyltransferase from Aeromonas hydrophila subsp. hydrophila (strain ATCC 7966 / DSM 30187 / BCRC 13018 / CCUG 14551 / JCM 1027 / KCTC 2358 / NCIMB 9240 / NCTC 8049).